The following is a 710-amino-acid chain: DNA ligase (710 aa).

A disordered region spans residues 1–36; that stretch reads MTSSSPRHADPDENPYVEAPPTDFEPVGALSEDEAT. NAD(+) is bound by residues 63-67, 111-112, and Glu147; these read DETYD and SI. Lys149 (N6-AMP-lysine intermediate) is an active-site residue. Residues Arg170, Glu206, and Lys353 each coordinate NAD(+). Zn(2+)-binding residues include Cys444, Cys447, Cys460, and Cys466. Residues 623–710 form the BRCT domain; the sequence is ETGDALDGLT…ERGVAWPPEE (88 aa). The tract at residues 657-689 is disordered; it reads ATSSVSGNTDYLVAGESPGRSKRDDADAEGVPV.

The protein belongs to the NAD-dependent DNA ligase family. LigA subfamily. The cofactor is Mg(2+). Requires Mn(2+) as cofactor.

The enzyme catalyses NAD(+) + (deoxyribonucleotide)n-3'-hydroxyl + 5'-phospho-(deoxyribonucleotide)m = (deoxyribonucleotide)n+m + AMP + beta-nicotinamide D-nucleotide.. Its function is as follows. DNA ligase that catalyzes the formation of phosphodiester linkages between 5'-phosphoryl and 3'-hydroxyl groups in double-stranded DNA using NAD as a coenzyme and as the energy source for the reaction. It is essential for DNA replication and repair of damaged DNA. The protein is DNA ligase of Halorubrum lacusprofundi (strain ATCC 49239 / DSM 5036 / JCM 8891 / ACAM 34).